Here is a 185-residue protein sequence, read N- to C-terminus: Elongation factor P (185 aa).

Belongs to the elongation factor P family.

It localises to the cytoplasm. Its pathway is protein biosynthesis; polypeptide chain elongation. In terms of biological role, involved in peptide bond synthesis. Stimulates efficient translation and peptide-bond synthesis on native or reconstituted 70S ribosomes in vitro. Probably functions indirectly by altering the affinity of the ribosome for aminoacyl-tRNA, thus increasing their reactivity as acceptors for peptidyl transferase. This is Elongation factor P from Dictyoglomus turgidum (strain DSM 6724 / Z-1310).